The sequence spans 239 residues: MNAASAIALLIVFSLVIGYLMGSVMFADVFGKILNKDVRKLGSKNPGATNSIRVFGLKIGFLVGLCDALKGFLAFVFSFLIFSFWLQQYLNVNQYQKVYYLTYLSCFAATIGHIFPLYFKFKGGKAIATTGGSLLAISLWWFVICLVLWLLVTLITKYVSLASLVTFFILAIIILVPWLDYLYFFKPNPINAISYQNDWYIILFFVLWYWPLTIAVFWLHRKNIHRLLNKTENKVTQLN.

Transmembrane regions (helical) follow at residues 6–26 (AIAL…SVMF), 61–81 (FLVG…SFLI), 99–119 (YYLT…PLYF), 135–155 (LAIS…VTLI), 159–179 (VSLA…VPWL), and 199–219 (WYII…VFWL).

The protein belongs to the PlsY family. As to quaternary structure, probably interacts with PlsX.

Its subcellular location is the cell membrane. The catalysed reaction is an acyl phosphate + sn-glycerol 3-phosphate = a 1-acyl-sn-glycero-3-phosphate + phosphate. Its pathway is lipid metabolism; phospholipid metabolism. Functionally, catalyzes the transfer of an acyl group from acyl-phosphate (acyl-PO(4)) to glycerol-3-phosphate (G3P) to form lysophosphatidic acid (LPA). This enzyme utilizes acyl-phosphate as fatty acyl donor, but not acyl-CoA or acyl-ACP. This is Glycerol-3-phosphate acyltransferase from Mycoplasma pneumoniae (strain ATCC 29342 / M129 / Subtype 1) (Mycoplasmoides pneumoniae).